The sequence spans 458 residues: Monomethylamine methyltransferase MtmB2 (458 aa).

Pyl-202 is a non-standard amino acid (pyrrolysine).

Belongs to the monomethylamine methyltransferase family. In terms of assembly, can form a complex with MtmC.

The enzyme catalyses Co(I)-[methylamine-specific corrinoid protein] + methylamine + H(+) = methyl-Co(III)-[methylamine-specific corrinoid protein] + NH4(+). Its pathway is one-carbon metabolism; methanogenesis from methylamine. Catalyzes the transfer of the methyl group from monomethylamine to the corrinoid cofactor of MtmC. The chain is Monomethylamine methyltransferase MtmB2 (mtmB2) from Methanosarcina acetivorans (strain ATCC 35395 / DSM 2834 / JCM 12185 / C2A).